The primary structure comprises 414 residues: Mu-like prophage FluMu F protein (414 aa).

To phage Mu protein F.

In terms of biological role, involved in virion morphogenesis. In Haemophilus influenzae (strain ATCC 51907 / DSM 11121 / KW20 / Rd), this protein is Mu-like prophage FluMu F protein.